The chain runs to 155 residues: Large ribosomal subunit protein eL24 (155 aa).

The segment covering 93–123 has biased composition (basic and acidic residues); sequence KRNARPETRNATRAKHAEAAKERKEKEAERR. Positions 93–155 are disordered; that stretch reads KRNARPETRN…SAPKVQATSR (63 aa).

Belongs to the eukaryotic ribosomal protein eL24 family.

This Yarrowia lipolytica (strain CLIB 122 / E 150) (Yeast) protein is Large ribosomal subunit protein eL24 (RPL24).